An 88-amino-acid polypeptide reads, in one-letter code: Small ribosomal subunit protein uS15 (88 aa).

The protein belongs to the universal ribosomal protein uS15 family. Part of the 30S ribosomal subunit. Forms a bridge to the 50S subunit in the 70S ribosome, contacting the 23S rRNA.

One of the primary rRNA binding proteins, it binds directly to 16S rRNA where it helps nucleate assembly of the platform of the 30S subunit by binding and bridging several RNA helices of the 16S rRNA. Functionally, forms an intersubunit bridge (bridge B4) with the 23S rRNA of the 50S subunit in the ribosome. This is Small ribosomal subunit protein uS15 from Borrelia garinii subsp. bavariensis (strain ATCC BAA-2496 / DSM 23469 / PBi) (Borreliella bavariensis).